The sequence spans 309 residues: Fructosamine-3-kinase (309 aa).

Met-1 is modified (N-acetylmethionine). 89–91 (EHL) provides a ligand contact to ATP. Asp-217 serves as the catalytic Proton acceptor.

Belongs to the fructosamine kinase family. Monomer. In terms of tissue distribution, expressed in red blood cells, brain, heart, kidney and muscle. Lower expression is observed in liver. Not expressed in lung, spleen, testis and thymus.

The enzyme catalyses N(6)-(D-fructosyl)-L-lysyl-[protein] + ATP = N(6)-(3-O-phospho-D-fructosyl)-L-lysyl-[protein] + ADP + H(+). It catalyses the reaction N(6)-D-ribulosyl-L-lysyl-[protein] + ATP = N(6)-(3-O-phospho-D-ribulosyl)-L-lysyl-[protein] + ADP + H(+). It carries out the reaction N(6)-(D-psicosyl)-L-lysyl-[protein] + ATP = N(6)-(3-O-phospho-D-psicosyl)-L-lysyl-[protein] + ADP + H(+). In terms of biological role, fructosamine-3-kinase involved in protein deglycation by mediating phosphorylation of fructoselysine residues on glycated proteins, to generate fructoselysine-3 phosphate. Fructoselysine-3 phosphate adducts are unstable and decompose under physiological conditions. Involved in intracellular deglycation in erythrocytes and pancreatic islets. Involved in the response to oxidative stress by mediating deglycation of NFE2L2/NRF2, glycation impairing NFE2L2/NRF2 function. Also able to phosphorylate psicosamines and ribulosamines. In Mus musculus (Mouse), this protein is Fructosamine-3-kinase.